A 512-amino-acid chain; its full sequence is Gamma-aminobutyric acid receptor subunit beta-2 (512 aa).

An N-terminal signal peptide occupies residues 1–25 (MWRVRKRGYFGIWSFPLIIAAVCAQ). The Extracellular segment spans residues 26-244 (SVNDPSNMSL…SFKLKRNIGY (219 aa)). Asn-32 and Asn-104 each carry an N-linked (GlcNAc...) asparagine glycan. Tyr-121 serves as a coordination point for histamine. Residues Cys-160 and Cys-174 are joined by a disulfide bond. A glycan (N-linked (GlcNAc...) asparagine) is linked at Asn-173. Histamine is bound by residues 180–181 (SY) and Thr-226. 4-aminobutanoate is bound by residues Tyr-181 and Thr-226. Helical transmembrane passes span 245 to 266 (FILQTYMPSILITILSWVSFWI), 270 to 292 (ASAARVALGITTVLTMTTINTHL), and 304 to 326 (AIDMYLMGCFVFVFMALLEYALV). Over 327-489 (NYIFFGRGPQ…DLTDVNAIDR (163 aa)) the chain is Cytoplasmic. A Phosphotyrosine modification is found at Tyr-441. A helical transmembrane segment spans residues 490–511 (WSRIFFPVVFSFFNIVYWLYYV).

Belongs to the ligand-gated ion channel (TC 1.A.9) family. Gamma-aminobutyric acid receptor (TC 1.A.9.5) subfamily. GABRB2 sub-subfamily. As to quaternary structure, heteropentamer, formed by a combination of alpha (GABRA1-6), beta (GABRB1-3), gamma (GABRG1-3), delta (GABRD), epsilon (GABRE), rho (GABRR1-3), pi (GABRP) and theta (GABRQ) chains, each subunit exhibiting distinct physiological and pharmacological properties. Interacts with UBQLN1. May interact with KIF21B. Identified in a complex of 720 kDa composed of LHFPL4, NLGN2, GABRA1, GABRB2, GABRG2 and GABRB3. In terms of processing, glycosylated.

It is found in the postsynaptic cell membrane. The protein localises to the cell membrane. It localises to the cytoplasmic vesicle. It catalyses the reaction chloride(in) = chloride(out). With respect to regulation, allosterically activated by benzodiazepines and the anesthetic etomidate. Inhibited by the antagonist bicuculline. Potentiated by histamine. In terms of biological role, beta subunit of the heteropentameric ligand-gated chloride channel gated by gamma-aminobutyric acid (GABA), a major inhibitory neurotransmitter in the brain. GABA-gated chloride channels, also named GABA(A) receptors (GABAAR), consist of five subunits arranged around a central pore and contain GABA active binding site(s) located at the alpha and beta subunit interface(s). When activated by GABA, GABAARs selectively allow the flow of chloride anions across the cell membrane down their electrochemical gradient. Chloride influx into the postsynaptic neuron following GABAAR opening decreases the neuron ability to generate a new action potential, thereby reducing nerve transmission. GABAARs containing alpha-1 and beta-2 or -3 subunits exhibit synaptogenic activity; the gamma-2 subunit being necessary but not sufficient to induce rapid synaptic contacts formation. Extrasynaptic beta-2 receptors contribute to the tonic GABAergic inhibition. Beta-containing GABAARs can simultaneously bind GABA and histamine where histamine binds at the interface of two neighboring beta subunits, which may be involved in the regulation of sleep and wakefulness. In Mus musculus (Mouse), this protein is Gamma-aminobutyric acid receptor subunit beta-2.